We begin with the raw amino-acid sequence, 196 residues long: MEKVVLLLSVLSLGVVCPQPMTDSQRFSIAVSRIHYLHQVAQRSFFTFESSLSAEDQRQLNKIFLQDSCNSDYIRSPIDKHETQRSSVMKLLSISYRLVESWEYPSRALIGGSTNQISNKLSELKLGIRLLMEANQDGAEIFPESSAFQLDYQSLGTDDPRQMYELLACFKKDMHKVETYLTVAKCRLSPEANCTL.

The first 18 residues, 1–18 (MEKVVLLLSVLSLGVVCP), serve as a signal peptide directing secretion. Gln-19 carries the pyrrolidone carboxylic acid modification. A Zn(2+)-binding site is contributed by His-35. Cys-69 and Cys-169 are joined by a disulfide. Glu-178 is a Zn(2+) binding site. A disulfide bond links Cys-186 and Cys-194.

It belongs to the somatotropin/prolactin family.

Its subcellular location is the secreted. Growth hormone plays an important role in growth control and is involved in the regulation of several anabolic processes. Implicated as an osmoregulatory substance important for seawater adaptation. This is Somatotropin (gh) from Siganus guttatus (Orange-spotted spinefoot).